Here is a 52-residue protein sequence, read N- to C-terminus: uncharacterized protein (52 aa).

Residues 1–52 (MFGFIYRDPSPAPQGKIRDGSKDPKTPGGGGGGGGGISPNGGAPLGGKGFSM) are disordered. Residues 16–25 (KIRDGSKDPK) are compositionally biased toward basic and acidic residues. Residues 27-52 (PGGGGGGGGGISPNGGAPLGGKGFSM) show a composition bias toward gly residues.

This is an uncharacterized protein from Dictyostelium discoideum (Social amoeba).